A 315-amino-acid polypeptide reads, in one-letter code: Protein SHORT INTERNODES 1 (315 aa).

Residues 1–10 show a composition bias toward gly residues; the sequence is MAGFPLGGGS. 2 disordered regions span residues 1-24 and 64-92; these read MAGF…PPVH and PPAP…GGGG. Over residues 70–82 the composition is skewed to low complexity; it reads AGASSSSSSRGMR. Positions 83-92 are enriched in gly residues; it reads SSGGGGGGGG. Zn(2+)-binding residues include cysteine 97, cysteine 100, cysteine 108, cysteine 113, cysteine 117, and cysteine 124. The segment at residues 97-124 is a DNA-binding region (zn(2)-C6 fungal-type; degenerate); that stretch reads CQDCGNQAKKDCTHMRCRTCCKSRGFAC. Composition is skewed to low complexity over residues 143 to 156 and 172 to 182; these read QQLA…AATA and RPSATTPTTSS. A disordered region spans residues 143–186; the sequence is QQLAALAASAAATAGGAGPSRDPTKRPRARPSATTPTTSSGDQQ. Positions 227 to 230 match the Required for homo- and heterodimerization motif; sequence IGGH.

It belongs to the SHI protein family. Forms homodimers (via C-terminus). Interacts with SPL14/IPA1 (via C-terminus). As to expression, predominantly expressed in axillary buds and young panicles.

Its subcellular location is the nucleus. In terms of biological role, regulates tillering and panicle branching by modulating SPL14/IPA1 transcriptional activity on the downstream TB1 and DEP1 target genes. Binds directly to the 5'-T/GCTCTAC-3' DNA motif found in the promoter regions of both TB1 and DEP1. Represses the DNA binding activity of SPL14/IPA1 toward the promoters of both TB1 and DEP1. Exhibits weak transcriptional activation activity in yeast cells. This chain is Protein SHORT INTERNODES 1, found in Oryza sativa subsp. japonica (Rice).